A 365-amino-acid polypeptide reads, in one-letter code: Eukaryotic translation initiation factor 3 subunit H (365 aa).

An MPN domain is found at 11–160 (VKVEALVVMK…LRAFRLSPKF (150 aa)).

Belongs to the eIF-3 subunit H family. As to quaternary structure, component of the eukaryotic translation initiation factor 3 (eIF-3) complex.

Its subcellular location is the cytoplasm. Component of the eukaryotic translation initiation factor 3 (eIF-3) complex, which is involved in protein synthesis of a specialized repertoire of mRNAs and, together with other initiation factors, stimulates binding of mRNA and methionyl-tRNAi to the 40S ribosome. The eIF-3 complex specifically targets and initiates translation of a subset of mRNAs involved in cell proliferation. The polypeptide is Eukaryotic translation initiation factor 3 subunit H (Aspergillus clavatus (strain ATCC 1007 / CBS 513.65 / DSM 816 / NCTC 3887 / NRRL 1 / QM 1276 / 107)).